The chain runs to 33 residues: Beta-amanitin proprotein (33 aa).

A propeptide spanning residues 1-10 (MSDINATRLP) is cleaved from the precursor. A cross-link (cyclopeptide (Ile-Pro)) is located at residues 11-18 (IWGIGCDP). The segment at residues 12–16 (WGIGC) is a cross-link (2'-cysteinyl-6'-hydroxytryptophan sulfoxide (Trp-Cys)). The propeptide occupies 19–33 (CVGDDVAALTTRGEA).

It belongs to the MSDIN fungal toxin family. Post-translationally, processed by the macrocyclase-peptidase enzyme POPB to yield a toxic cyclic decapeptide. POPB first removes 10 residues from the N-terminus. Conformational trapping of the remaining peptide forces the enzyme to release this intermediate rather than proceed to macrocyclization. The enzyme rebinds the remaining peptide in a different conformation and catalyzes macrocyclization of the N-terminal 8 residues.

Functionally, toxin belonging to the bicyclic octapeptides amatoxins that acts by binding non-competitively to RNA polymerase II and greatly slowing the elongation of transcripts from target promoters. This is Beta-amanitin proprotein from Amanita rimosa.